The following is a 225-amino-acid chain: Sodium-dependent neutral amino acid transporter SLC6A17 (225 aa).

The next 3 membrane-spanning stretches (helical) occupy residues asparagine 1–leucine 8, alanine 16–leucine 35, and glycine 60–isoleucine 80. Residues glycine 81–asparagine 143 are Extracellular-facing. N-linked (GlcNAc...) asparagine glycosylation is present at asparagine 105. Helical transmembrane passes span tryptophan 144 to valine 162, valine 171 to valine 188, and isoleucine 224 to phenylalanine 225.

Belongs to the sodium:neurotransmitter symporter (SNF) (TC 2.A.22) family.

It is found in the cytoplasmic vesicle. The protein localises to the secretory vesicle. The protein resides in the synaptic vesicle membrane. It localises to the postsynapse. Its subcellular location is the presynapse. It carries out the reaction L-proline(in) + Na(+)(in) = L-proline(out) + Na(+)(out). It catalyses the reaction L-leucine(in) + Na(+)(in) = L-leucine(out) + Na(+)(out). The catalysed reaction is glycine(in) + Na(+)(in) = glycine(out) + Na(+)(out). The enzyme catalyses L-alanine(in) + Na(+)(in) = L-alanine(out) + Na(+)(out). It carries out the reaction L-glutamine(in) + Na(+)(in) = L-glutamine(out) + Na(+)(out). Its function is as follows. Synaptic vesicle transporter with apparent selectivity for neutral amino acids. The transport is sodium-coupled but chloride-independent, likely driven by the proton electrochemical gradient generated by vacuolar H(+)-ATPase in an overall electrogenic mechanism. May contribute to the synaptic uptake of neurotransmitter precursors in a process coupled in part to vesicle exocytosis. The sequence is that of Sodium-dependent neutral amino acid transporter SLC6A17 from Bos taurus (Bovine).